Here is a 334-residue protein sequence, read N- to C-terminus: MAASIKDVAREARVSIATVSRVLNNVDVVNEETKKKVMEAIKKLDYRPNIVARSLKTQRTRTIGIVIPDISSQFYPEIVRGAEDVSNIYNYNVILCNTDLDISKEKDYIRVLKEKMVDGVIYMSNSLAPEILQLLRDLKIPTVLVETRESEDENAFPSVTIDNAKAAYDAVNYLIKKGNNKIAYVGVNPKLKNNARAIIYEGYKKALLDNNIPLNENLIQFGGLKAIDGTDGINVIIKKEKIDAVFCACDEIAMGAINALRENGIDVPKDVDVVGFDNIYTSSIFYPKLTTIEQPTYDMGSVGMRMLIKIINKAEPECLHYVLDYNIIERDSCK.

The region spanning 1 to 57 is the HTH lacI-type domain; it reads MAASIKDVAREARVSIATVSRVLNNVDVVNEETKKKVMEAIKKLDYRPNIVARSLKT. The segment at residues 5–24 is a DNA-binding region (H-T-H motif); sequence IKDVAREARVSIATVSRVLN.

Its function is as follows. Involved in the regulation of amylase production. In Clostridium acetobutylicum (strain ATCC 824 / DSM 792 / JCM 1419 / IAM 19013 / LMG 5710 / NBRC 13948 / NRRL B-527 / VKM B-1787 / 2291 / W), this protein is HTH-type transcriptional regulator RegA (regA).